We begin with the raw amino-acid sequence, 266 residues long: Energy-coupling factor transporter transmembrane protein EcfT (266 aa).

Helical transmembrane passes span 32–52, 71–91, 107–127, 152–172, and 246–266; these read IIVV…AFTV, PLLW…PAGG, LINA…STLL, VPVD…PTLM, and DTVT…FRHW.

Belongs to the energy-coupling factor EcfT family. In terms of assembly, forms a stable energy-coupling factor (ECF) transporter complex composed of 2 membrane-embedded substrate-binding proteins (S component), 2 ATP-binding proteins (A component) and 2 transmembrane proteins (T component). May be able to interact with more than 1 S component at a time.

Its subcellular location is the cell membrane. Functionally, transmembrane (T) component of an energy-coupling factor (ECF) ABC-transporter complex. Unlike classic ABC transporters this ECF transporter provides the energy necessary to transport a number of different substrates. The chain is Energy-coupling factor transporter transmembrane protein EcfT from Levilactobacillus brevis (strain ATCC 367 / BCRC 12310 / CIP 105137 / JCM 1170 / LMG 11437 / NCIMB 947 / NCTC 947) (Lactobacillus brevis).